Reading from the N-terminus, the 222-residue chain is Chromatin-associated protein SWI6 (222 aa).

The segment covering 1 to 15 has biased composition (basic and acidic residues); that stretch reads MPVIKKEELSQKKDL. 2 disordered regions span residues 1–26 and 77–147; these read MPVI…GLED and ETQD…DRQY. Acidic residues predominate over residues 16-26; the sequence is ESEEEDSGLED. Residues 28-87 form the Chromo domain; the sequence is YEVEKVIKHRGKGKNIEFLVRWKGYGPEYDTWEPTENVASAEEAVAAYWETQDKTATAPR.

As to quaternary structure, interacts with DMT5.

The protein localises to the nucleus. Recognizes and binds histone H3 tails methylated at 'Lys-9', leading to epigenetic repression. Localizes DMT5 to heterochromatin characterized by trimethylation of histone H3 tails at 'Lys-9'. The sequence is that of Chromatin-associated protein SWI6 from Cryptococcus neoformans var. grubii serotype A (strain H99 / ATCC 208821 / CBS 10515 / FGSC 9487) (Filobasidiella neoformans var. grubii).